The chain runs to 39 residues: Large ribosomal subunit protein bL12 (39 aa).

Belongs to the bacterial ribosomal protein bL12 family. In terms of assembly, homodimer. Part of the ribosomal stalk of the 50S ribosomal subunit. Forms a multimeric L10(L12)X complex, where L10 forms an elongated spine to which 2 to 4 L12 dimers bind in a sequential fashion. Binds GTP-bound translation factors.

Forms part of the ribosomal stalk which helps the ribosome interact with GTP-bound translation factors. Is thus essential for accurate translation. The chain is Large ribosomal subunit protein bL12 (rplL) from Arthrobacter glacialis.